The chain runs to 466 residues: Ribulose bisphosphate carboxylase large chain (466 aa).

The residue at position 5 (Lys-5) is an N6,N6,N6-trimethyllysine. Residues Asn-114 and Thr-164 each coordinate substrate. Lys-166 functions as the Proton acceptor in the catalytic mechanism. Lys-168 is a binding site for substrate. Residues Lys-192, Asp-194, and Glu-195 each contribute to the Mg(2+) site. At Lys-192 the chain carries N6-carboxylysine. The active-site Proton acceptor is His-285. Residues Arg-286, His-318, and Ser-370 each coordinate substrate.

Belongs to the RuBisCO large chain family. Type I subfamily. In terms of assembly, heterohexadecamer of 8 large chains and 8 small chains; disulfide-linked. The disulfide link is formed within the large subunit homodimers. Requires Mg(2+) as cofactor. In terms of processing, the disulfide bond which can form in the large chain dimeric partners within the hexadecamer appears to be associated with oxidative stress and protein turnover.

The protein resides in the plastid. Its subcellular location is the chloroplast. The catalysed reaction is 2 (2R)-3-phosphoglycerate + 2 H(+) = D-ribulose 1,5-bisphosphate + CO2 + H2O. It catalyses the reaction D-ribulose 1,5-bisphosphate + O2 = 2-phosphoglycolate + (2R)-3-phosphoglycerate + 2 H(+). Its function is as follows. RuBisCO catalyzes two reactions: the carboxylation of D-ribulose 1,5-bisphosphate, the primary event in carbon dioxide fixation, as well as the oxidative fragmentation of the pentose substrate in the photorespiration process. Both reactions occur simultaneously and in competition at the same active site. This Drosera peltata (Pale sundew) protein is Ribulose bisphosphate carboxylase large chain.